A 251-amino-acid chain; its full sequence is tRNA (guanine-N(1)-)-methyltransferase (251 aa).

S-adenosyl-L-methionine is bound by residues G113 and 133–138; that span reads MGDYVL.

It belongs to the RNA methyltransferase TrmD family. Homodimer.

It is found in the cytoplasm. The enzyme catalyses guanosine(37) in tRNA + S-adenosyl-L-methionine = N(1)-methylguanosine(37) in tRNA + S-adenosyl-L-homocysteine + H(+). In terms of biological role, specifically methylates guanosine-37 in various tRNAs. In Sodalis glossinidius (strain morsitans), this protein is tRNA (guanine-N(1)-)-methyltransferase.